Reading from the N-terminus, the 299-residue chain is Phosphatidylcholine-sterol acyltransferase (299 aa).

N-linked (GlcNAc...) asparagine glycosylation is found at asparagine 28 and asparagine 184. Cysteine 225 and cysteine 268 are oxidised to a cystine. Aspartate 257 functions as the Charge relay system in the catalytic mechanism. A glycan (N-linked (GlcNAc...) asparagine) is linked at asparagine 285. Histidine 289 acts as the Charge relay system in catalysis. N-linked (GlcNAc...) asparagine glycosylation is present at asparagine 296.

It belongs to the AB hydrolase superfamily. Lipase family.

The protein localises to the secreted. It carries out the reaction a sterol + a 1,2-diacyl-sn-glycero-3-phosphocholine = a sterol ester + a 1-acyl-sn-glycero-3-phosphocholine. APOA1 is the most potent activator in plasma. Also activated by APOE, APOC1 and APOA4. In terms of biological role, central enzyme in the extracellular metabolism of plasma lipoproteins. Synthesized mainly in the liver and secreted into plasma where it converts cholesterol and phosphatidylcholines (lecithins) to cholesteryl esters and lysophosphatidylcholines on the surface of high and low density lipoproteins (HDLs and LDLs). The cholesterol ester is then transported back to the liver. Has a preference for plasma 16:0-18:2 or 18:O-18:2 phosphatidylcholines. Also produced in the brain by primary astrocytes, and esterifies free cholesterol on nascent APOE-containing lipoproteins secreted from glia and influences cerebral spinal fluid (CSF) APOE- and APOA1 levels. Together with APOE and the cholesterol transporter ABCA1, plays a key role in the maturation of glial-derived, nascent lipoproteins. Required for remodeling high-density lipoprotein particles into their spherical forms. This is Phosphatidylcholine-sterol acyltransferase (LCAT) from Micromys minutus (European harvest mouse).